The primary structure comprises 256 residues: Acetyl-coenzyme A carboxylase carboxyl transferase subunit alpha (256 aa).

In terms of domain architecture, CoA carboxyltransferase C-terminal spans 1-236 (MSDVARILKE…KTAIVDELAE (236 aa)).

The protein belongs to the AccA family. As to quaternary structure, acetyl-CoA carboxylase is a heterohexamer composed of biotin carboxyl carrier protein (AccB), biotin carboxylase (AccC) and two subunits each of ACCase subunit alpha (AccA) and ACCase subunit beta (AccD).

The protein resides in the cytoplasm. The enzyme catalyses N(6)-carboxybiotinyl-L-lysyl-[protein] + acetyl-CoA = N(6)-biotinyl-L-lysyl-[protein] + malonyl-CoA. Its pathway is lipid metabolism; malonyl-CoA biosynthesis; malonyl-CoA from acetyl-CoA: step 1/1. Its function is as follows. Component of the acetyl coenzyme A carboxylase (ACC) complex. First, biotin carboxylase catalyzes the carboxylation of biotin on its carrier protein (BCCP) and then the CO(2) group is transferred by the carboxyltransferase to acetyl-CoA to form malonyl-CoA. This is Acetyl-coenzyme A carboxylase carboxyl transferase subunit alpha from Streptococcus thermophilus (strain ATCC BAA-491 / LMD-9).